The following is a 348-amino-acid chain: Oxidase ucsJ (348 aa).

This sequence belongs to the avfA family.

It participates in mycotoxin biosynthesis. In terms of biological role, oxidase; part of the gene cluster that mediates the biosynthesis of UCS1025A, a member of the pyrrolizidinone family that acts as a strong telomerase inhibitor and displays potent antibacterial and antitumor properties. These compounds share a hemiaminal-containing pyrrolizidinone core fused with a gamma-lactone, giving a furopyrrolizidine that is connected to a decalin fragment. The polyketide synthase module (PKS) of the PKS-NRPS ucsA is responsible for the synthesis of the polyketide backbone via the condensation of an acetyl-CoA starter unit with 6 malonyl-CoA units. The downstream nonribosomal peptide synthetase (NRPS) module then amidates the carboxyl end of the polyketide with a 2S,3S-methylproline derived from L-isoleucine by the 2-oxoglutarate-dependent dioxygenase ucsF which converts L-isoleucine to (4S,5S)-4-methylpyrroline-5-carboxylate that is further converted to 2S,3S-methylproline by the pyrroline-5-carboxylate reductase ucsG. Reductive release of the completed aminoacyl polyketide from the assembly line can form the 3-pyrrolin-2-one structure via an intramolecular Knoevenagel reaction. Because ucsA lacks a designated enoylreductase (ER) domain, the required activity is provided the enoyl reductase ucsL. This keto acyclic precursor is the substrate of the Diels-Alderase ucsH, that catalyzes the Diels-Alder cycloaddition. Oxidation of the 3S-methyl group to a carboxylate by the cytochrome P450 monooxygenase ucsK allows an oxa-Michael cyclization that might involve the reductase/dehydrogenase ucsI and which furnishes the furopyrrolizidine. The oxidase ucsJ likely plays a critical role in stereoselective reduction of the C5-C6 double bond to afford the required R-configured carboxylate group. Further enolization and oxidation at C5 by an unidentified enzyme affords the last intermediate that can undergo oxa-Michael cyclization to yield UCS1025A. This chain is Oxidase ucsJ, found in Acremonium sp.